We begin with the raw amino-acid sequence, 38 residues long: Large ribosomal subunit protein bL36 (38 aa).

The protein belongs to the bacterial ribosomal protein bL36 family.

This chain is Large ribosomal subunit protein bL36, found in Chloroflexus aurantiacus (strain ATCC 29366 / DSM 635 / J-10-fl).